The primary structure comprises 345 residues: Dimethyladenosine transferase 1, mitochondrial (345 aa).

Residues 1-27 (MAASGKLGTFRLPPLPTIREIIKLFGL) constitute a mitochondrion transit peptide. S-adenosyl-L-methionine-binding positions include 35–38 (QNFL), Asn-36, Leu-38, Gly-63, Glu-85, Asp-111, and Asn-141.

Belongs to the class I-like SAM-binding methyltransferase superfamily. rRNA adenine N(6)-methyltransferase family. KsgA subfamily. As to quaternary structure, interacts with mitochondrial RNA polymerase POLRMT. Interacts with TFAM.

The protein localises to the mitochondrion. S-adenosyl-L-methionine-dependent methyltransferase which specifically dimethylates mitochondrial 12S rRNA at the conserved stem loop. Also required for basal transcription of mitochondrial DNA, probably via its interaction with POLRMT and TFAM. Stimulates transcription independently of the methyltransferase activity. This is Dimethyladenosine transferase 1, mitochondrial (Tfb1m) from Rattus norvegicus (Rat).